The primary structure comprises 823 residues: DNA mismatch repair protein MutS (823 aa).

Residue 605–612 participates in ATP binding; that stretch reads GPNMSGKS.

This sequence belongs to the DNA mismatch repair MutS family.

Its function is as follows. This protein is involved in the repair of mismatches in DNA. It is possible that it carries out the mismatch recognition step. This protein has a weak ATPase activity. This chain is DNA mismatch repair protein MutS, found in Fervidobacterium nodosum (strain ATCC 35602 / DSM 5306 / Rt17-B1).